Here is a 466-residue protein sequence, read N- to C-terminus: Ribulose bisphosphate carboxylase (466 aa).

Asn111 serves as a coordination point for substrate. The active-site Proton acceptor is the Lys166. Lys168 serves as a coordination point for substrate. Mg(2+) is bound by residues Lys191, Asp193, and Glu194. N6-carboxylysine is present on Lys191. His287 functions as the Proton acceptor in the catalytic mechanism. Substrate-binding residues include Arg288, His321, and Ser368.

This sequence belongs to the RuBisCO large chain family. Type II subfamily. In terms of assembly, homodimer. Mg(2+) is required as a cofactor.

The catalysed reaction is 2 (2R)-3-phosphoglycerate + 2 H(+) = D-ribulose 1,5-bisphosphate + CO2 + H2O. It carries out the reaction D-ribulose 1,5-bisphosphate + O2 = 2-phosphoglycolate + (2R)-3-phosphoglycerate + 2 H(+). RuBisCO catalyzes two reactions: the carboxylation of D-ribulose 1,5-bisphosphate, the primary event in carbon dioxide fixation, as well as the oxidative fragmentation of the pentose substrate. Both reactions occur simultaneously and in competition at the same active site. The protein is Ribulose bisphosphate carboxylase (cbbM) of Rhodospirillum rubrum.